Here is a 51-residue protein sequence, read N- to C-terminus: Non-specific lipid-transfer protein (51 aa).

The protein belongs to the plant LTP family.

Functionally, plant non-specific lipid-transfer proteins transfer phospholipids as well as galactolipids across membranes. May play a role in wax or cutin deposition in the cell walls of expanding epidermal cells and certain secretory tissues. The sequence is that of Non-specific lipid-transfer protein from Lycium barbarum (Barbary matrimony-vine).